Here is a 1507-residue protein sequence, read N- to C-terminus: MDPSRRPPKDSPYANLFDLEPLMKFRIPKPEDEVDYYGSSSQDESRSTQGGVVANYSNGSKSRMNASSKKRKRWTEAEDAEDDDDLYNQHVTEEHYRSMLGEHVQKFKNRSKETQGNPPHLMGFPVLKSNVGSYRGRKPGNDYHGRFYDMDNSPNFAADVTPHRRGSYHDRDITPKIAYEPSYLDIGDGVIYKIPPSYDKLVASLNLPSFSDIHVEEFYLKGTLDLRSLAELMASDKRSGVRSRNGMGEPRPQYESLQARMKALSPSNSTPNFSLKVSEAAMNSAIPEGSAGSTARTILSEGGVLQVHYVKILEKGDTYEIVKRSLPKKLKAKNDPAVIEKTERDKIRKAWINIVRRDIAKHHRIFTTFHRKLSIDAKRFADGCQREVRMKVGRSYKIPRTAPIRTRKISRDMLLFWKRYDKQMAEERKKQEKEAAEAFKREQEQRESKRQQQRLNFLIKQTELYSHFMQNKTDSNPSEALPIGDENPIDEVLPETSAAEPSEVEDPEEAELKEKVLRAAQDAVSKQKQITDAFDTEYMKLRQTSEMEGPLNDISVSGSSNIDLHNPSTMPVTSTVQTPELFKGTLKEYQMKGLQWLVNCYEQGLNGILADEMGLGKTIQAMAFLAHLAEEKNIWGPFLVVAPASVLNNWADEISRFCPDLKTLPYWGGLQERTILRKNINPKRMYRRDAGFHILITSYQLLVTDEKYFRRVKWQYMVLDEAQAIKSSSSIRWKTLLSFNCRNRLLLTGTPIQNNMAELWALLHFIMPMLFDNHDQFNEWFSKGIENHAEHGGTLNEHQLNRLHAILKPFMLRRVKKDVVSELTTKTEVTVHCKLSSRQQAFYQAIKNKISLAELFDSNRGQFTDKKVLNLMNIVIQLRKVCNHPELFERNEGSSYLYFGVTSNSLLPHPFGELEDVHYSGGQNPIIYKIPKLLHQEVLQNSETFCSSVGRGISRESFLKHFNIYSPEYILKSIFPSDSGVDQVVSGSGAFGFSRLMDLSPSEVGYLALCSVAERLLFSILRWERQFLDELVNSLMESKDGDLSDNNIERVKTKAVTRMLLMPSKVETNFQKRRLSTGPTRPSFEALVISHQDRFLSSIKLLHSAYTYIPKARAPPVSIHCSDRNSAYRVTEELHQPWLKRLLIGFARTSEANGPRKPNSFPHPLIQEIDSELPVVQPALQLTHRIFGSCPPMQSFDPAKLLTDSGKLQTLDILLKRLRAGNHRVLLFAQMTKMLNILEDYMNYRKYKYLRLDGSSTIMDRRDMVRDFQHRSDIFVFLLSTRAGGLGINLTAADTVIFYESDWNPTLDLQAMDRAHRLGQTKDVTVYRLICKETVEEKILHRASQKNTVQQLVMTGGHVQGDDFLGAADVVSLLMDDAEAAQLEQKFRELPLQVKDRQKKKTKRIRIDAEGDATLEELEDVDRQDNGQEPLEEPEKPKSSNKKRRAASNPKARAPQKAKEEANGEDTPQRTKRVKRQTKSINESLEPVFSASVTESNKGFDPSSSAN.

Disordered regions lie at residues 30-82 and 428-452; these read PEDE…DAED and RKKQ…KRQQ. A compositionally biased stretch (polar residues) spans 38–67; that stretch reads GSSSQDESRSTQGGVVANYSNGSKSRMNAS. The 126-residue stretch at 350–475 folds into the DBINO domain; it reads AWINIVRRDI…SHFMQNKTDS (126 aa). The segment covering 428 to 450 has biased composition (basic and acidic residues); it reads RKKQEKEAAEAFKREQEQRESKR. Residues 598–769 form the Helicase ATP-binding domain; the sequence is VNCYEQGLNG…WALLHFIMPM (172 aa). 611-618 contributes to the ATP binding site; sequence DEMGLGKT. The region spanning 1210-1360 is the Helicase C-terminal domain; the sequence is TLDILLKRLR…QLVMTGGHVQ (151 aa). Residues 1415 to 1507 form a disordered region; the sequence is LEELEDVDRQ…KGFDPSSSAN (93 aa). The segment covering 1491-1507 has biased composition (polar residues); the sequence is ASVTESNKGFDPSSSAN.

The protein belongs to the SNF2/RAD54 helicase family. Component of the INO80 chromatin-remodeling complex. Associates with REF6/EIN6.

It localises to the nucleus. It carries out the reaction ATP + H2O = ADP + phosphate + H(+). Functionally, ATPase component of the chromatin remodeling INO80 complex which is involved in transcriptional regulation, DNA replication and DNA repair. Binds DNA. As part of the INO80 complex, remodels chromatin by shifting nucleosomes. The INO80 complex controls ethylene-induced H2A.Z eviction dynamics. Positive regulator of homologous recombination, but not an essential component of homologous recombination. Not involved in the illegitimate repair pathway. The protein is Chromatin-remodeling ATPase INO80 of Arabidopsis thaliana (Mouse-ear cress).